The primary structure comprises 238 residues: tRNA1(Val) (adenine(37)-N6)-methyltransferase (238 aa).

It belongs to the methyltransferase superfamily. tRNA (adenine-N(6)-)-methyltransferase family.

Its subcellular location is the cytoplasm. The catalysed reaction is adenosine(37) in tRNA1(Val) + S-adenosyl-L-methionine = N(6)-methyladenosine(37) in tRNA1(Val) + S-adenosyl-L-homocysteine + H(+). In terms of biological role, specifically methylates the adenine in position 37 of tRNA(1)(Val) (anticodon cmo5UAC). The polypeptide is tRNA1(Val) (adenine(37)-N6)-methyltransferase (Shewanella baltica (strain OS195)).